Here is a 99-residue protein sequence, read N- to C-terminus: Aspartyl/glutamyl-tRNA(Asn/Gln) amidotransferase subunit C (99 aa).

This sequence belongs to the GatC family. As to quaternary structure, heterotrimer of A, B and C subunits.

The enzyme catalyses L-glutamyl-tRNA(Gln) + L-glutamine + ATP + H2O = L-glutaminyl-tRNA(Gln) + L-glutamate + ADP + phosphate + H(+). It carries out the reaction L-aspartyl-tRNA(Asn) + L-glutamine + ATP + H2O = L-asparaginyl-tRNA(Asn) + L-glutamate + ADP + phosphate + 2 H(+). Allows the formation of correctly charged Asn-tRNA(Asn) or Gln-tRNA(Gln) through the transamidation of misacylated Asp-tRNA(Asn) or Glu-tRNA(Gln) in organisms which lack either or both of asparaginyl-tRNA or glutaminyl-tRNA synthetases. The reaction takes place in the presence of glutamine and ATP through an activated phospho-Asp-tRNA(Asn) or phospho-Glu-tRNA(Gln). This is Aspartyl/glutamyl-tRNA(Asn/Gln) amidotransferase subunit C from Polaromonas sp. (strain JS666 / ATCC BAA-500).